The chain runs to 213 residues: GTP cyclohydrolase 1 (213 aa).

3 residues coordinate Zn(2+): C104, H107, and C175.

The protein belongs to the GTP cyclohydrolase I family. In terms of assembly, toroid-shaped homodecamer, composed of two pentamers of five dimers.

It carries out the reaction GTP + H2O = 7,8-dihydroneopterin 3'-triphosphate + formate + H(+). It participates in cofactor biosynthesis; 7,8-dihydroneopterin triphosphate biosynthesis; 7,8-dihydroneopterin triphosphate from GTP: step 1/1. The polypeptide is GTP cyclohydrolase 1 (Brucella anthropi (strain ATCC 49188 / DSM 6882 / CCUG 24695 / JCM 21032 / LMG 3331 / NBRC 15819 / NCTC 12168 / Alc 37) (Ochrobactrum anthropi)).